Reading from the N-terminus, the 307-residue chain is 2-phospho-L-lactate transferase (307 aa).

2 residues coordinate 7,8-didemethyl-8-hydroxy-5-deazariboflavin: Asp-48 and Lys-87.

Belongs to the CofD family. As to quaternary structure, homodimer. It depends on Mg(2+) as a cofactor.

The catalysed reaction is (2S)-lactyl-2-diphospho-5'-guanosine + 7,8-didemethyl-8-hydroxy-5-deazariboflavin = oxidized coenzyme F420-0 + GMP + H(+). It functions in the pathway cofactor biosynthesis; coenzyme F420 biosynthesis. Its function is as follows. Catalyzes the transfer of the 2-phospholactate moiety from (2S)-lactyl-2-diphospho-5'-guanosine to 7,8-didemethyl-8-hydroxy-5-deazariboflavin (FO) with the formation of oxidized coenzyme F420-0 and GMP. The protein is 2-phospho-L-lactate transferase of Methanosarcina acetivorans (strain ATCC 35395 / DSM 2834 / JCM 12185 / C2A).